Here is a 234-residue protein sequence, read N- to C-terminus: Leucyl/phenylalanyl-tRNA--protein transferase (234 aa).

This sequence belongs to the L/F-transferase family.

Its subcellular location is the cytoplasm. It catalyses the reaction N-terminal L-lysyl-[protein] + L-leucyl-tRNA(Leu) = N-terminal L-leucyl-L-lysyl-[protein] + tRNA(Leu) + H(+). It carries out the reaction N-terminal L-arginyl-[protein] + L-leucyl-tRNA(Leu) = N-terminal L-leucyl-L-arginyl-[protein] + tRNA(Leu) + H(+). The enzyme catalyses L-phenylalanyl-tRNA(Phe) + an N-terminal L-alpha-aminoacyl-[protein] = an N-terminal L-phenylalanyl-L-alpha-aminoacyl-[protein] + tRNA(Phe). In terms of biological role, functions in the N-end rule pathway of protein degradation where it conjugates Leu, Phe and, less efficiently, Met from aminoacyl-tRNAs to the N-termini of proteins containing an N-terminal arginine or lysine. In Salmonella arizonae (strain ATCC BAA-731 / CDC346-86 / RSK2980), this protein is Leucyl/phenylalanyl-tRNA--protein transferase.